The sequence spans 204 residues: uncharacterized protein (204 aa).

Cys52 functions as the Acyl-thioester intermediate in the catalytic mechanism. Active-site residues include His89 and Asp104.

The protein belongs to the arylamine N-acetyltransferase family.

This is an uncharacterized protein from Acanthamoeba polyphaga mimivirus (APMV).